We begin with the raw amino-acid sequence, 536 residues long: Pre-mRNA-splicing factor SLU7-B (536 aa).

The disordered stretch occupies residues 1 to 42 (MATASVAFKSREDHRKKLELEEARKAGLAPAEVDEDGKEINP). A compositionally biased stretch (basic and acidic residues) spans 9–25 (KSREDHRKKLELEEARK). The CCHC-type zinc-finger motif lies at 96–109 (CINCGAMTHSSKAC). 2 disordered regions span residues 176–201 (LKKL…DLDD) and 488–507 (KEDL…YNVN). Positions 187 to 200 (NGDDATSDGEEDLD) are enriched in acidic residues. Ser193 is modified (phosphoserine). Residues 486–493 (LKKEDLSR) carry the Nuclear localization signal motif. The segment covering 488-501 (KEDLSRREEKDERK) has biased composition (basic and acidic residues).

The protein belongs to the SLU7 family. As to quaternary structure, interacts with PHYB in photobodies under red light.

It is found in the nucleus. Participates in the second catalytic step of pre-mRNA splicing, when the free hydroxyl group of exon I attacks the 3'-splice site to generate spliced mRNA and the excised lariat intron. Splicing factor acting as a negative regulator of seedling photomorphogenesis by antagonizing PHYB signaling to promote light-induced hypocotyl elongation. Prevents the accumulation of functionally spliced RVE8a form, a circadian clock regulator mediating the transcriptional activation of clock genes containing evening elements (EE), but promotes PIF4 expression to fine-tune hypocotyl elongation in the light. Together with SMP1, involved in the timing of cell cycle arrest during leaf development, in a STRUWWELPETER (SWP) dependent manner; promotes cell proliferation in developing organs. This Arabidopsis thaliana (Mouse-ear cress) protein is Pre-mRNA-splicing factor SLU7-B.